We begin with the raw amino-acid sequence, 252 residues long: PF03932 family protein CutC (252 aa).

This sequence belongs to the CutC family.

It localises to the cytoplasm. The sequence is that of PF03932 family protein CutC from Sodalis glossinidius (strain morsitans).